We begin with the raw amino-acid sequence, 153 residues long: Nucleoside diphosphate kinase (153 aa).

ATP contacts are provided by Lys11, Phe59, Arg87, Thr93, Arg104, and Asn114. The Pros-phosphohistidine intermediate role is filled by His117.

This sequence belongs to the NDK family. Mg(2+) serves as cofactor.

The enzyme catalyses a 2'-deoxyribonucleoside 5'-diphosphate + ATP = a 2'-deoxyribonucleoside 5'-triphosphate + ADP. The catalysed reaction is a ribonucleoside 5'-diphosphate + ATP = a ribonucleoside 5'-triphosphate + ADP. Its function is as follows. Major role in the synthesis of nucleoside triphosphates other than ATP. The ATP gamma phosphate is transferred to the NDP beta phosphate via a ping-pong mechanism, using a phosphorylated active-site intermediate. The protein is Nucleoside diphosphate kinase (swoH) of Emericella nidulans (strain FGSC A4 / ATCC 38163 / CBS 112.46 / NRRL 194 / M139) (Aspergillus nidulans).